Consider the following 508-residue polypeptide: Lysine--tRNA ligase (508 aa).

Residues Glu416 and Glu423 each contribute to the Mg(2+) site.

The protein belongs to the class-II aminoacyl-tRNA synthetase family. Homodimer. The cofactor is Mg(2+).

It is found in the cytoplasm. It carries out the reaction tRNA(Lys) + L-lysine + ATP = L-lysyl-tRNA(Lys) + AMP + diphosphate. The polypeptide is Lysine--tRNA ligase (Prochlorococcus marinus (strain MIT 9303)).